The primary structure comprises 2273 residues: Acetyl-CoA carboxylase, mitochondrial (2273 aa).

The N-terminal 104 residues, 1 to 104, are a transit peptide targeting the mitochondrion; the sequence is KGKTITHGQS…RGNIHKHTRL (104 aa). The region spanning 134–635 is the Biotin carboxylation domain; the sequence is VISKILIANN…STGWLDDLIL (502 aa). Residues 292–484 enclose the ATP-grasp domain; that stretch reads KTNFVSVPDD…LPATQLQIAM (193 aa). 332 to 337 contacts ATP; sequence GGGGKG. R459 is a catalytic residue. Residues 763 to 837 enclose the Biotinyl-binding domain; the sequence is LEAELNPTQV…EAGDVIAKLT (75 aa). The residue at position 804 (K804) is an N6-biotinyllysine. Residues 1532-1867 enclose the CoA carboxyltransferase N-terminal domain; that stretch reads PYSVKDWLQP…KRDMSPPLLE (336 aa). The interval 1532 to 2187 is carboxyltransferase; sequence PYSVKDWLQP…EGQVIKRLQK (656 aa). CoA is bound by residues R1776, K2080, and R2082. The 317-residue stretch at 1871–2187 folds into the CoA carboxyltransferase C-terminal domain; that stretch reads RWDRDVDFKP…EGQVIKRLQK (317 aa).

Biotin serves as cofactor.

The protein resides in the mitochondrion. The catalysed reaction is hydrogencarbonate + acetyl-CoA + ATP = malonyl-CoA + ADP + phosphate + H(+). It catalyses the reaction N(6)-biotinyl-L-lysyl-[protein] + hydrogencarbonate + ATP = N(6)-carboxybiotinyl-L-lysyl-[protein] + ADP + phosphate + H(+). Its pathway is lipid metabolism; malonyl-CoA biosynthesis; malonyl-CoA from acetyl-CoA: step 1/1. In terms of biological role, catalyzes the rate-limiting reaction in the mitochondrial fatty acid synthesis (FAS) type II pathway. Responsible for the production of the mitochondrial malonyl-CoA, used for the biosynthesis of the cofactor lipoic acid. This protein carries three functions: biotin carboxyl carrier protein, biotin carboxylase, and carboxyltransferase. This is Acetyl-CoA carboxylase, mitochondrial (HFA1) from Saccharomyces cerevisiae (strain Lalvin EC1118 / Prise de mousse) (Baker's yeast).